We begin with the raw amino-acid sequence, 387 residues long: Odorant receptor 94a (387 aa).

At 1–45 (MDKHKDRIESMRLILQVMQLFGLWPWSLKSEEEWTFTGFVKRNYR) the chain is on the cytoplasmic side. The chain crosses the membrane as a helical span at residues 46–66 (FLLHLPITFTFIGLMWLEAFI). Over 67-75 (SSNLEQAGQ) the chain is Extracellular. The chain crosses the membrane as a helical span at residues 76–96 (VLYMSITEMALVVKILSIWHY). Topologically, residues 97-133 (RTEAWRLMYELQHAPDYQLHNQEEVDFWRREQRFFKW) are cytoplasmic. The chain crosses the membrane as a helical span at residues 134–154 (FFYIYILISLGVVYSGCTGVL). Over 155–191 (FLEGYELPFAYYVPFEWQNERRYWFAYGYDMAGMTLT) the chain is Extracellular. A helical membrane pass occupies residues 192–212 (CISNITLDTLGCYFLFHISLL). Topologically, residues 213–255 (YRLLGLRLRETKNMKNDTIFGQQLRAIFIMHQRIRSLTLTCQR) are cytoplasmic. A helical transmembrane segment spans residues 256–276 (IVSPYILSQIILSALIICFSG). Residues 277-290 (YRLQHVGIRDNPGQ) lie on the Extracellular side of the membrane. Residues 291-311 (FISMLQFVSVMILQIYLPCYY) form a helical membrane-spanning segment. Residues 312–362 (GNEITVYANQLTNEVYHTNWLECRPPIRKLLNAYMEHLKKPVTIRAGNFFA) lie on the Cytoplasmic side of the membrane. The helical transmembrane segment at 363-383 (VGLPIFVKTINNAYSFLALLL) threads the bilayer. Asparagine 384 is a glycosylation site (N-linked (GlcNAc...) asparagine). Over 384–387 (NVSN) the chain is Extracellular.

This sequence belongs to the insect chemoreceptor superfamily. Heteromeric odorant receptor channel (TC 1.A.69) family. Or2a subfamily. As to quaternary structure, interacts with Orco. Complexes exist early in the endomembrane system in olfactory sensory neurons (OSNs), coupling these complexes to the conserved ciliary trafficking pathway.

Its subcellular location is the cell membrane. In terms of biological role, odorant receptor which mediates acceptance or avoidance behavior, depending on its substrates. The odorant receptor repertoire encodes a large collection of odor stimuli that vary widely in identity, intensity, and duration. May form a complex with Orco to form odorant-sensing units, providing sensitive and prolonged odorant signaling and calcium permeability. In Drosophila melanogaster (Fruit fly), this protein is Odorant receptor 94a (Or94a).